Consider the following 388-residue polypeptide: Fibrinogen- and Ig-binding protein (388 aa).

Residues 1-41 (MSKTNPNKLYSLRKLKTGTASVAVDLTVLGTGLANTTDVKA) form the signal peptide. 4 D repeats span residues 288–293 (EKLEAE), 294–299 (AKALKE), 302–307 (AKQAEE), and 309–314 (AKLKAD). Residues 308-362 (LAKLKADKASGAQKPDTKPGNKEVPTRPSQTRTNTNKAPMAQTKRQLPSTGEETT) form a disordered region. Residues 322–332 (PDTKPGNKEVP) show a composition bias toward basic and acidic residues. Residues 334–362 (RPSQTRTNTNKAPMAQTKRQLPSTGEETT) show a composition bias toward polar residues. Positions 354–358 (LPSTG) match the LPXTG sorting signal motif. Pentaglycyl murein peptidoglycan amidated threonine is present on T357. A propeptide spans 358–388 (GEETTNPFFTAAALTVIASAGVLALKRKEEN) (removed by sortase).

The protein resides in the secreted. The protein localises to the cell wall. Its function is as follows. Binds IgG molecules of the Ig1, Ig2 and Ig4 subclasses, and also binds fibrinogen. The polypeptide is Fibrinogen- and Ig-binding protein (mrp4) (Streptococcus pyogenes).